A 164-amino-acid chain; its full sequence is UPF0304 protein ECA3037 (164 aa).

It belongs to the UPF0304 family.

This Pectobacterium atrosepticum (strain SCRI 1043 / ATCC BAA-672) (Erwinia carotovora subsp. atroseptica) protein is UPF0304 protein ECA3037.